The sequence spans 556 residues: Arginine--tRNA ligase (556 aa).

Positions Ala-133 to His-143 match the 'HIGH' region motif.

This sequence belongs to the class-I aminoacyl-tRNA synthetase family. Monomer.

Its subcellular location is the cytoplasm. It carries out the reaction tRNA(Arg) + L-arginine + ATP = L-arginyl-tRNA(Arg) + AMP + diphosphate. The protein is Arginine--tRNA ligase of Dehalococcoides mccartyi (strain ATCC BAA-2100 / JCM 16839 / KCTC 5957 / BAV1).